The sequence spans 403 residues: MKEESILVKAGRKFNDYKGSMNPPVYHSSTILFPTYKDYLNAANGESIYDVINDGVARDYSYSNVGTPTVHYLSNALAEIEGSGQALIYPSGLFALTFAILTFAKAGSHVLIQDNSYYRLRRFAENELPKRGTEVTFYDPTQDITDLIQSNTSLIMIETPGSVTFEISNIEHIVKVAKEHKIVTVCDNSWATPLLFKPLDYGVDVALYAVTKYLAGHSDLVMGAIIAEGEIFKLLYESYKNYGVTIQSHDCYLAHRGLRTLYTRMKRHQNTAMEVAKWLEKHSKIKKVLYPALPFHPQHELWKSYFKGASGTFSIALDREYSCEELSCMVDHMKIFGIGASWGGCDSLILPIDRRSMSRSVMNSDYGGSFIRIFCGLEDPEDLISDLNAALARLPCLNTKTGR.

Pyridoxal 5'-phosphate contacts are provided by residues 62 to 64 (YSN), 92 to 93 (GL), and 209 to 211 (AVT). Lys-212 bears the N6-(pyridoxal phosphate)lysine mark.

This sequence belongs to the trans-sulfuration enzymes family. Homotetramer; dimer of active dimers. Pyridoxal 5'-phosphate serves as cofactor.

The enzyme catalyses L-alanine = D-alanine. It carries out the reaction L-glutamate = D-glutamate. The catalysed reaction is L,L-cystathionine + H2O = L-homocysteine + pyruvate + NH4(+). The protein operates within cell wall biogenesis; peptidoglycan biosynthesis. Catalyzes the racemization of L-alanine to D-alanine, and of L-glutamate to D-glutamate. The activity is low, but likely physiological since W.pipientis wMel lacks canonical alr and murI genes, while D-alanine and D-glutamate are essential components of peptidoglycan. Also displays a vestigial cystathionine beta-lyase (CBL) activity, cleaving cystathionine to homocysteine and pyruvate; however, this reaction seems not to be physiologically relevant since the only met gene in the genome of this obligately intracellular parasitic bacterium is metC, demonstrating that it is a methionine auxotroph. This chain is L-alanine/L-glutamate racemase, found in Wolbachia pipientis wMel.